The chain runs to 1634 residues: Phosphatidylinositol 4-phosphate 3-kinase C2 domain-containing subunit beta (1634 aa).

The segment at 2-298 (SSTQGNGEHW…YASRYGNRKN (297 aa)) is interaction with GRB2. Disordered regions lie at residues 45 to 188 (EENR…QPSD) and 259 to 315 (GRGP…VGSR). Over residues 87–112 (SDPTLNYNSLSPQEGPPNHSTSQGPQ) the composition is skewed to polar residues. Residues 176-187 (GSPSSSKISQPS) show a composition bias toward low complexity. The segment covering 259–270 (GRGPLDFSKDTS) has biased composition (basic and acidic residues). Positions 375 to 463 (EVNLKVTVLC…DIDIRLQLME (89 aa)) constitute a PI3K-RBD domain. The 152-residue stretch at 635–786 (VYATHRIPII…DSVILQIDFP (152 aa)) folds into the C2 PI3K-type domain. One can recognise a PIK helical domain in the interval 805 to 981 (RYEFGSLREE…QYLLAALLCC (177 aa)). Residues 1050 to 1328 (VPRDCSYFNS…LIESSLGSVA (279 aa)) form the PI3K/PI4K catalytic domain. Positions 1056 to 1062 (YFNSNAV) are G-loop. The catalytic loop stretch occupies residues 1192–1200 (GICDRHNDN). The tract at residues 1211–1237 (HIDFGRFLGHAQMFGNIKRDRAPFVFT) is activation loop. Residues 1365–1481 (GRISDVFLCR…TFFHPLPRDE (117 aa)) form the PX domain. A C2 domain is found at 1504–1624 (VGGEVKLSIS…DLAQEKTGWF (121 aa)).

This sequence belongs to the PI3/PI4-kinase family. Part of a complex with ERBB2 and EGFR. Part of a complex with phosphorylated EGFR and GRB2. Interacts with phosphorylated EGFR and PDGFR, maybe indirectly. Interacts with GRB2. It depends on Ca(2+) as a cofactor. Requires Mg(2+) as cofactor. Mn(2+) serves as cofactor. In terms of tissue distribution, expressed in columnar and transitional epithelia, mononuclear cells, and ganglion cells (at protein level). Widely expressed, with highest levels in thymus and placenta and lowest in peripheral blood, skeletal muscle and kidney.

Its subcellular location is the microsome. It is found in the cell membrane. The protein localises to the cytoplasm. The protein resides in the cytosol. It localises to the nucleus. Its subcellular location is the endoplasmic reticulum. The catalysed reaction is a 1,2-diacyl-sn-glycero-3-phospho-(1D-myo-inositol 4-phosphate) + ATP = a 1,2-diacyl-sn-glycero-3-phospho-(1D-myo-inositol-3,4-bisphosphate) + ADP + H(+). It carries out the reaction a 1,2-diacyl-sn-glycero-3-phospho-(1D-myo-inositol) + ATP = a 1,2-diacyl-sn-glycero-3-phospho-(1D-myo-inositol-3-phosphate) + ADP + H(+). Its activity is regulated as follows. Activated by GRB2. Its function is as follows. Phosphorylates PtdIns and PtdIns4P with a preference for PtdIns. Does not phosphorylate PtdIns(4,5)P2. May be involved in EGF and PDGF signaling cascades. This Homo sapiens (Human) protein is Phosphatidylinositol 4-phosphate 3-kinase C2 domain-containing subunit beta (PIK3C2B).